The primary structure comprises 482 residues: Glutamyl-tRNA(Gln) amidotransferase subunit A (482 aa).

Active-site charge relay system residues include lysine 80 and serine 159. The Acyl-ester intermediate role is filled by serine 183.

The protein belongs to the amidase family. GatA subfamily. Heterotrimer of A, B and C subunits.

It catalyses the reaction L-glutamyl-tRNA(Gln) + L-glutamine + ATP + H2O = L-glutaminyl-tRNA(Gln) + L-glutamate + ADP + phosphate + H(+). Its function is as follows. Allows the formation of correctly charged Gln-tRNA(Gln) through the transamidation of misacylated Glu-tRNA(Gln) in organisms which lack glutaminyl-tRNA synthetase. The reaction takes place in the presence of glutamine and ATP through an activated gamma-phospho-Glu-tRNA(Gln). The sequence is that of Glutamyl-tRNA(Gln) amidotransferase subunit A from Neorickettsia sennetsu (strain ATCC VR-367 / Miyayama) (Ehrlichia sennetsu).